We begin with the raw amino-acid sequence, 342 residues long: Phosphoribosylformylglycinamidine cyclo-ligase (342 aa).

Belongs to the AIR synthase family.

The protein localises to the cytoplasm. The catalysed reaction is 2-formamido-N(1)-(5-O-phospho-beta-D-ribosyl)acetamidine + ATP = 5-amino-1-(5-phospho-beta-D-ribosyl)imidazole + ADP + phosphate + H(+). Its pathway is purine metabolism; IMP biosynthesis via de novo pathway; 5-amino-1-(5-phospho-D-ribosyl)imidazole from N(2)-formyl-N(1)-(5-phospho-D-ribosyl)glycinamide: step 2/2. This chain is Phosphoribosylformylglycinamidine cyclo-ligase, found in Staphylococcus aureus (strain MRSA252).